We begin with the raw amino-acid sequence, 440 residues long: Transposon Ty1-ER2 Gag polyprotein (440 aa).

Polar residues-rich tracts occupy residues 1-10, 48-60, and 127-152; these read MESQQLSNYP, TKAN…TPAS, and QSQF…GNTF. Disordered regions lie at residues 1–93, 126–173, and 352–440; these read MESQ…MMTQ, PQSQ…RPPP, and GSRN…PETY. Residues 153 to 165 are compositionally biased toward low complexity; the sequence is TDSSSADSDMTST. The interval 299-401 is RNA-binding; sequence NNGIHINNKV…NSKSKTARAH (103 aa). Low complexity predominate over residues 402–418; it reads NVSTSNNSPSTDNDSIS. Ser-416 carries the post-translational modification Phosphoserine. The segment covering 419–428 has biased composition (polar residues); that stretch reads KSTTEPIQLN. Basic and acidic residues predominate over residues 429 to 440; sequence NKHDLHLRPETY.

As to quaternary structure, homotrimer.

The protein resides in the cytoplasm. Functionally, capsid protein (CA) is the structural component of the virus-like particle (VLP), forming the shell that encapsulates the retrotransposons dimeric RNA genome. The particles are assembled from trimer-clustered units and there are holes in the capsid shells that allow for the diffusion of macromolecules. CA also has nucleocapsid-like chaperone activity, promoting primer tRNA(i)-Met annealing to the multipartite primer-binding site (PBS), dimerization of Ty1 RNA and initiation of reverse transcription. The chain is Transposon Ty1-ER2 Gag polyprotein (TY1A-ER2) from Saccharomyces cerevisiae (strain ATCC 204508 / S288c) (Baker's yeast).